Here is a 398-residue protein sequence, read N- to C-terminus: Acetyl-CoA acetyltransferase (398 aa).

Ser-2 carries the N-acetylserine modification. Residue Cys-91 is the Acyl-thioester intermediate of the active site. CoA contacts are provided by Tyr-186 and Lys-231. Residue Tyr-186 participates in K(+) binding. 3 residues coordinate K(+): Ala-248, Ala-249, and Ala-251. Residue Ser-252 coordinates CoA. Val-350 lines the K(+) pocket. Active-site proton acceptor residues include His-354 and Cys-384.

Belongs to the thiolase-like superfamily. Thiolase family. As to quaternary structure, homotetramer.

The protein resides in the cytoplasm. It is found in the cytosol. The catalysed reaction is 2 acetyl-CoA = acetoacetyl-CoA + CoA. It participates in metabolic intermediate biosynthesis; (R)-mevalonate biosynthesis; (R)-mevalonate from acetyl-CoA: step 1/3. Acetyl-CoA acetyltransferase; part of the first module of ergosterol biosynthesis pathway that includes the early steps of the pathway, conserved across all eukaryotes, and which results in the formation of mevalonate from acetyl-coenzyme A (acetyl-CoA). ERG10 catalyzes the formation of acetoacetyl-CoA from acetyl-CoA. The first module starts with the action of the cytosolic acetyl-CoA acetyltransferase ERG10 that catalyzes the formation of acetoacetyl-CoA. The hydroxymethylglutaryl-CoA synthase ERG13 then condenses acetyl-CoA with acetoacetyl-CoA to form HMG-CoA. The rate-limiting step of the early module is the reduction to mevalonate by the 3-hydroxy-3-methylglutaryl-coenzyme A (HMG-CoA) reductases HMG1 and HMG2 which are derived from a single ancestral HMGR gene by gene duplication. This Saccharomyces cerevisiae (strain ATCC 204508 / S288c) (Baker's yeast) protein is Acetyl-CoA acetyltransferase.